A 120-amino-acid chain; its full sequence is Immunoglobulin kappa variable 2D-29 (120 aa).

Residues 1 to 20 (MRLPAQLLGLLMLWIPGSSA) form the signal peptide. The tract at residues 21–43 (DIVMTQTPLSLSVTPGQPASISC) is framework-1. The region spanning 21-120 (DIVMTQTPLS…YYCMQSIQLP (100 aa)) is the Ig-like domain. A disulfide bond links C43 and C113. The interval 44–59 (KSSQSLLHSDGKTYLY) is complementarity-determining-1. Residues 60–74 (WYLQKPGQPPQLLIY) form a framework-2 region. The complementarity-determining-2 stretch occupies residues 75–81 (EVSNRFS). Residues 82–113 (GVPDRFSGSGSGTDFTLKISRVEAEDVGVYYC) are framework-3. A complementarity-determining-3 region spans residues 114–120 (MQSIQLP).

Immunoglobulins are composed of two identical heavy chains and two identical light chains; disulfide-linked.

Its subcellular location is the secreted. The protein resides in the cell membrane. In terms of biological role, v region of the variable domain of immunoglobulin light chains that participates in the antigen recognition. Immunoglobulins, also known as antibodies, are membrane-bound or secreted glycoproteins produced by B lymphocytes. In the recognition phase of humoral immunity, the membrane-bound immunoglobulins serve as receptors which, upon binding of a specific antigen, trigger the clonal expansion and differentiation of B lymphocytes into immunoglobulins-secreting plasma cells. Secreted immunoglobulins mediate the effector phase of humoral immunity, which results in the elimination of bound antigens. The antigen binding site is formed by the variable domain of one heavy chain, together with that of its associated light chain. Thus, each immunoglobulin has two antigen binding sites with remarkable affinity for a particular antigen. The variable domains are assembled by a process called V-(D)-J rearrangement and can then be subjected to somatic hypermutations which, after exposure to antigen and selection, allow affinity maturation for a particular antigen. This chain is Immunoglobulin kappa variable 2D-29, found in Homo sapiens (Human).